Here is a 267-residue protein sequence, read N- to C-terminus: Ribosomal RNA small subunit methyltransferase J (267 aa).

S-adenosyl-L-methionine contacts are provided by residues 133-134 (ER) and aspartate 187.

The protein belongs to the methyltransferase superfamily. RsmJ family.

The protein resides in the cytoplasm. It carries out the reaction guanosine(1516) in 16S rRNA + S-adenosyl-L-methionine = N(2)-methylguanosine(1516) in 16S rRNA + S-adenosyl-L-homocysteine + H(+). Functionally, specifically methylates the guanosine in position 1516 of 16S rRNA. The chain is Ribosomal RNA small subunit methyltransferase J from Halorhodospira halophila (strain DSM 244 / SL1) (Ectothiorhodospira halophila (strain DSM 244 / SL1)).